The primary structure comprises 427 residues: 3-phosphoshikimate 1-carboxyvinyltransferase (427 aa).

The 3-phosphoshikimate site is built by Lys20, Ser21, and Arg25. Residue Lys20 coordinates phosphoenolpyruvate. Residues Gly92 and Arg120 each coordinate phosphoenolpyruvate. 3-phosphoshikimate-binding residues include Ser166, Gln168, Asp312, and Lys339. Gln168 serves as a coordination point for phosphoenolpyruvate. Catalysis depends on Asp312, which acts as the Proton acceptor. Residues Arg343 and Arg385 each coordinate phosphoenolpyruvate.

It belongs to the EPSP synthase family. As to quaternary structure, monomer.

Its subcellular location is the cytoplasm. It catalyses the reaction 3-phosphoshikimate + phosphoenolpyruvate = 5-O-(1-carboxyvinyl)-3-phosphoshikimate + phosphate. It participates in metabolic intermediate biosynthesis; chorismate biosynthesis; chorismate from D-erythrose 4-phosphate and phosphoenolpyruvate: step 6/7. Its function is as follows. Catalyzes the transfer of the enolpyruvyl moiety of phosphoenolpyruvate (PEP) to the 5-hydroxyl of shikimate-3-phosphate (S3P) to produce enolpyruvyl shikimate-3-phosphate and inorganic phosphate. The protein is 3-phosphoshikimate 1-carboxyvinyltransferase of Streptococcus uberis (strain ATCC BAA-854 / 0140J).